Reading from the N-terminus, the 219-residue chain is Elongation factor Ts (219 aa).

Residues T82–V85 form an involved in Mg(2+) ion dislocation from EF-Tu region.

Belongs to the EF-Ts family.

It localises to the cytoplasm. Its function is as follows. Associates with the EF-Tu.GDP complex and induces the exchange of GDP to GTP. It remains bound to the aminoacyl-tRNA.EF-Tu.GTP complex up to the GTP hydrolysis stage on the ribosome. The polypeptide is Elongation factor Ts (Synechococcus sp. (strain CC9902)).